A 251-amino-acid polypeptide reads, in one-letter code: Putative ATP-binding protein Rv3427c in insertion sequence (251 aa).

108-115 (GPVGVGKT) is an ATP binding site.

It belongs to the IS21/IS1162 putative ATP-binding protein family.

The protein is Putative ATP-binding protein Rv3427c in insertion sequence of Mycobacterium tuberculosis (strain ATCC 25618 / H37Rv).